The sequence spans 115 residues: Large ribosomal subunit protein bL19 (115 aa).

The protein belongs to the bacterial ribosomal protein bL19 family.

In terms of biological role, this protein is located at the 30S-50S ribosomal subunit interface and may play a role in the structure and function of the aminoacyl-tRNA binding site. The sequence is that of Large ribosomal subunit protein bL19 from Clostridium kluyveri (strain ATCC 8527 / DSM 555 / NBRC 12016 / NCIMB 10680 / K1).